Reading from the N-terminus, the 235-residue chain is PRA1 family protein 1 (235 aa).

Residues 1–17 (MESNSNSNETMYGNPNI) show a composition bias toward polar residues. The tract at residues 1–55 (MESNSNSNETMYGNPNINMGFVDSGNSNIGNNTGSMSPPPQQQQQPQQASSTPAG) is disordered. A compositionally biased stretch (low complexity) spans 24-48 (SGNSNIGNNTGSMSPPPQQQQQPQQ). Transmembrane regions (helical) follow at residues 144–164 (SVFFIITNPFYLLLLGVLLFI) and 187–207 (AFLSIYFLLYAGSSIFWLVGA).

This sequence belongs to the PRA1 family.

Its subcellular location is the membrane. May act as a general Rab protein regulator. The chain is PRA1 family protein 1 (prafA) from Dictyostelium discoideum (Social amoeba).